The following is a 563-amino-acid chain: MAEAAYTVASDSENTGEEKSSSSPSLPEIALGIDIGTSQCSIAVWNGSQVHILRNTRNQKLIKSFVTFKDEVPAGGVSNQLAHEQEMLTGAAIFNMKRLVGRVDTDPVVHASKNLPFLVQTLDIGVRPFIAALVNNAWRSTTPEEVLAIFLVELRLMAEAQLKRPVRNVVLTVPVSFSRFQLTRFERACAMAGLHVLRLMPEPTAIALLYAQQQQMTTHDNMGSGSERLAVIFNMGAGYCDVAVTATAGGVSQIKALAGSPIGGEDILQNTIRHIAPPNEEASGLLRVAAQDAIHRLTDQENVQIEVDLGNGNKISKVLDRLEFEEVNQKVFEECERLVVQCLRDARVNGGDIDDLIMVGGCSYIPKVRTIIKNVCKKDEIYKGVNPLEAAVRGAALEGAVTSGIHDPFGSLDLLTIQATPLAVGVRANGNKFIPVIPRNTMVPARKDLFFTTVQDNQKEALIIIYEGEGETVEENHLLGYFKLVGIPPAPKGVPEINVCMDIDASNALRVFAAVLMPGSSSPVVPVIEVRMPTVDDGHGWCAQALNVKYGATLDLITLQRKM.

The tract at residues 1–25 (MAEAAYTVASDSENTGEEKSSSSPS) is disordered. Alanine 2 bears the N-acetylalanine mark.

Belongs to the heat shock protein 70 (TC 1.A.33) family. DnaK subfamily.

In terms of biological role, in cooperation with other chaperones, Hsp70s are key components that facilitate folding of de novo synthesized proteins, assist translocation of precursor proteins into organelles, and are responsible for degradation of damaged protein under stress conditions. This chain is Heat shock 70 kDa protein 8 (HSP70-8), found in Arabidopsis thaliana (Mouse-ear cress).